We begin with the raw amino-acid sequence, 186 residues long: dCTP deaminase (186 aa).

107–112 (KSTYAR) lines the dCTP pocket. Residue E133 is the Proton donor/acceptor of the active site. DCTP-binding residues include Q152, Y166, and Q176.

It belongs to the dCTP deaminase family. As to quaternary structure, homotrimer.

It carries out the reaction dCTP + H2O + H(+) = dUTP + NH4(+). It functions in the pathway pyrimidine metabolism; dUMP biosynthesis; dUMP from dCTP (dUTP route): step 1/2. Catalyzes the deamination of dCTP to dUTP. In Campylobacter jejuni (strain RM1221), this protein is dCTP deaminase.